The following is a 1787-amino-acid chain: Chitin synthase 5 (1787 aa).

Positions 1-26 are disordered; the sequence is MASRRMSMYSVTSEGMGGPRGAGQQS. Asparagine 164 carries N-linked (GlcNAc...) asparagine glycosylation. Positions 345–367 are disordered; the sequence is RIRDGDESSDGGRGARTPNSAED. N-linked (GlcNAc...) asparagine glycans are attached at residues asparagine 643, asparagine 657, asparagine 668, and asparagine 695. The next 2 helical transmembrane spans lie at 747–767 and 783–803; these read MWVA…LRYV and FVLC…IIFL. Asparagine 894 and asparagine 1018 each carry an N-linked (GlcNAc...) asparagine glycan. A helical transmembrane segment spans residues 1055-1075; it reads FLLAFAIIMCAVILLKFVSAL. Asparagine 1420 is a glycosylation site (N-linked (GlcNAc...) asparagine). Transmembrane regions (helical) follow at residues 1445–1465, 1478–1498, and 1506–1526; these read FVVF…VYLG, FPLI…LIFI, and IGWM…LPIY. Asparagine 1533 is a glycosylation site (N-linked (GlcNAc...) asparagine). The segment at 1628 to 1657 is disordered; the sequence is SPNSPAPYQHMSRSPTAYAGPTPYSDNPAA. The 57-residue stretch at 1729–1785 folds into the DEK-C domain; that stretch reads GPDDFQIVDAIRAVLMEVDLDTVTKKQVRALVEQRLQTELVGERRTFLDRQIDNELA.

Belongs to the chitin synthase family. Class V subfamily.

Its subcellular location is the cell membrane. It carries out the reaction [(1-&gt;4)-N-acetyl-beta-D-glucosaminyl](n) + UDP-N-acetyl-alpha-D-glucosamine = [(1-&gt;4)-N-acetyl-beta-D-glucosaminyl](n+1) + UDP + H(+). In terms of biological role, polymerizes chitin, a structural polymer of the cell wall and septum, by transferring the sugar moiety of UDP-GlcNAc to the non-reducing end of the growing chitin polymer. May play a minor overlapping role with CHS6 in growth and differentiation. This chain is Chitin synthase 5, found in Pyricularia oryzae (strain 70-15 / ATCC MYA-4617 / FGSC 8958) (Rice blast fungus).